A 564-amino-acid polypeptide reads, in one-letter code: Rhotekin (564 aa).

The residue at position 14 (Arg14) is an Omega-N-methylarginine. Residues 17-98 (ALEMEFKRGR…LQRRKEAQVL (82 aa)) form the REM-1 domain. Phosphoserine is present on residues Ser30 and Ser106. At Arg230 the chain carries Asymmetric dimethylarginine. A Phosphoserine modification is found at Ser232. Residues 309–416 (QPTASGALRV…WMEALWQLFF (108 aa)) form the PH domain. Positions 518–564 (TFSLDAAPADHSLGPSRSVAPLPPQRSPKSRGFYSKSQLGPWLQSPV) are disordered. Ser520, Ser529, and Ser544 each carry phosphoserine.

In terms of assembly, interacts via its C-terminal region with the TAX1BP3 PDZ domain. This interaction facilitates Rho-mediated activation of the c-Fos serum response element (SRE). Interacts with SEPT9. Specifically binds to GTP-bound RHOA, RHOB and RHOC and inhibits their GTPase activity. As to expression, abundantly expressed in brain and kidney. Weakly expressed in lung, testis, skeletal muscle, heart and thymus.

Its function is as follows. Mediates Rho signaling to activate NF-kappa-B and may confer increased resistance to apoptosis to cells in gastric tumorigenesis. May play a novel role in the organization of septin structures. This is Rhotekin from Mus musculus (Mouse).